The sequence spans 398 residues: MALKLHHTAFNPSMAVTSSGLPRSYHLRSHRVFMASSTIGITSKEIPNAKKPHMPPREAHVQKTHSMPPQKIEIFKSLEGWAEENVLVHLKPVEKCWQPQDFLPDPASEGFMDQVKELRERTKEIPDEYLVVLVGDMITEEALPTYQTMLNTLDGVRDETGASLTSWAIWTRAWTAEENRHGDLLNKYLYLTGRVDMKQIEKTIQYLIGSGMDPRSENNPYLGFIYTSFQERATFISHGNTARLAKDHGDFQLAQVCGIIAADEKRHETAYTKIVEKLFEIDPDGAVLALADMMRKKVSMPAHLMYDGKDDNLFENYSAVAQQIGVYTAKDYADILEHLVNRWKVENLMGLSGEGHKAQDFVCGLAPRIRKLGERAQSLSKPVSLVPFSWIFNKELKV.

The N-terminal 34 residues, 1-34 (MALKLHHTAFNPSMAVTSSGLPRSYHLRSHRVFM), are a transit peptide targeting the chloroplast. The interval 46 to 66 (IPNAKKPHMPPREAHVQKTHS) is disordered. Fe cation-binding residues include Glu-140, Glu-178, His-181, Glu-231, Glu-264, and His-267.

It belongs to the fatty acid desaturase type 2 family. Homodimer. It depends on Fe(2+) as a cofactor.

The protein localises to the plastid. It is found in the chloroplast. The catalysed reaction is octadecanoyl-[ACP] + 2 reduced [2Fe-2S]-[ferredoxin] + O2 + 2 H(+) = (9Z)-octadecenoyl-[ACP] + 2 oxidized [2Fe-2S]-[ferredoxin] + 2 H2O. The protein operates within lipid metabolism; fatty acid metabolism. Converts stearoyl-ACP to oleoyl-ACP by introduction of a cis double bond between carbons 9 and 10 of the acyl chain. This is Stearoyl-[acyl-carrier-protein] 9-desaturase, chloroplastic from Simmondsia chinensis (Jojoba).